The chain runs to 1034 residues: Isoleucine--tRNA ligase (1034 aa).

A 'HIGH' region motif is present at residues Pro-46–Thr-56. A 'KMSKS' region motif is present at residues Lys-598–Ser-602. Residue Lys-601 coordinates ATP.

This sequence belongs to the class-I aminoacyl-tRNA synthetase family. IleS type 2 subfamily. As to quaternary structure, monomer. The cofactor is Zn(2+).

The protein localises to the cytoplasm. The enzyme catalyses tRNA(Ile) + L-isoleucine + ATP = L-isoleucyl-tRNA(Ile) + AMP + diphosphate. In terms of biological role, catalyzes the attachment of isoleucine to tRNA(Ile). As IleRS can inadvertently accommodate and process structurally similar amino acids such as valine, to avoid such errors it has two additional distinct tRNA(Ile)-dependent editing activities. One activity is designated as 'pretransfer' editing and involves the hydrolysis of activated Val-AMP. The other activity is designated 'posttransfer' editing and involves deacylation of mischarged Val-tRNA(Ile). The chain is Isoleucine--tRNA ligase from Methanococcus maripaludis (strain DSM 14266 / JCM 13030 / NBRC 101832 / S2 / LL).